We begin with the raw amino-acid sequence, 323 residues long: Protoheme IX farnesyltransferase (323 aa).

A run of 9 helical transmembrane segments spans residues 28–48 (IIPL…NGQV), 50–70 (PVLL…AQTL), 99–119 (HALI…VVFV), 122–142 (ASAL…THML), 150–170 (IVIG…AVTG), 178–198 (ALFA…ALMI), 223–243 (IWIY…PLAA), 244–264 (SGIV…YKTW), and 279–299 (LFKY…VDSL).

This sequence belongs to the UbiA prenyltransferase family. Protoheme IX farnesyltransferase subfamily.

It localises to the cell inner membrane. The enzyme catalyses heme b + (2E,6E)-farnesyl diphosphate + H2O = Fe(II)-heme o + diphosphate. It participates in porphyrin-containing compound metabolism; heme O biosynthesis; heme O from protoheme: step 1/1. Its function is as follows. Converts heme B (protoheme IX) to heme O by substitution of the vinyl group on carbon 2 of heme B porphyrin ring with a hydroxyethyl farnesyl side group. In Gloeothece citriformis (strain PCC 7424) (Cyanothece sp. (strain PCC 7424)), this protein is Protoheme IX farnesyltransferase.